Reading from the N-terminus, the 3032-residue chain is Biorientation of chromosomes in cell division protein 1-like 1 (3032 aa).

Pro residues predominate over residues 1 to 31 (MATNPQPQPPPPAPPPPPPQPQPPPPPPGPG). Disordered regions lie at residues 1–48 (MATN…GAGD), 164–195 (EEAAGSTAPDDEKPESSVITQGAPAPGPSANV), 214–397 (NAAR…LDSD), and 409–465 (VHTS…RGVR). Residues 32–46 (AGPGASGPGSAGAGA) are compositionally biased toward gly residues. Residues 234–243 (KLSSQPSTDV) are compositionally biased toward polar residues. The segment covering 244 to 261 (STDKERGSEDATEREKAT) has biased composition (basic and acidic residues). Position 264 is a phosphoserine (S264). The span at 310-391 (TDPKIKSMDK…RAAEGTKEDC (82 aa)) shows a compositional bias: basic and acidic residues. Positions 416–441 (SFEEDTEEEVVVSESMEEGEITSEDE) are enriched in acidic residues. The residue at position 471 (K471) is an N6-acetyllysine. Phosphoserine is present on residues S480 and S482. 7 disordered regions span residues 480 to 1153 (SDSD…HKAT), 1165 to 1296 (MVDS…HNSN), 1309 to 1366 (GGRA…LSED), 1424 to 1491 (AAGE…SGRR), 1675 to 1701 (GSLSSEDVDGSQENRIQVGPKKETEGT), 1740 to 1858 (AKPQ…GHAS), and 1934 to 1978 (ALAG…ISTG). 2 stretches are compositionally biased toward basic and acidic residues: residues 488 to 503 (VEQRRQSIAKEKEERL) and 510 to 525 (REKLEEKRKQKAEKTK). Residue K534 is modified to N6-acetyllysine. Basic and acidic residues-rich tracts occupy residues 547–568 (LEPKAPRIKEVLKERKVLEKKV) and 578–653 (SRNV…EYKR). Phosphoserine occurs at positions 632 and 656. Residue T657 is modified to Phosphothreonine. 3 stretches are compositionally biased toward basic and acidic residues: residues 668 to 736 (TDTR…DKPS), 743 to 768 (GDSVHKMSDETELHSSEKGETEESVR), and 799 to 846 (RDGK…KLQK). Over residues 848-859 (ALSSKQHSVTSQ) the composition is skewed to polar residues. Composition is skewed to basic and acidic residues over residues 860–872 (KRSESCSEDKCET), 934–960 (KPDKEKNTEDNDTERQRKFKLEDRTSE), 978–1015 (AQKDSGHRAKLASIKEKHKTDKDSTSSKLERKVSDGHR), and 1022–1069 (SNKD…ENRR). S1071 is subject to Phosphoserine. Residues 1086-1096 (MSGTTSSSSLQ) are compositionally biased toward polar residues. Phosphoserine is present on S1138. Over residues 1272-1286 (STDSDLLSSSGSVTV) the composition is skewed to low complexity. Residues 1312–1329 (ASTSLANHSDVPNQYSTV) show a composition bias toward polar residues. Residues S1315 and S1364 each carry the phosphoserine modification. Basic and acidic residues-rich tracts occupy residues 1428 to 1470 (HVVD…RRDS) and 1479 to 1491 (GKMERGAAGSGRR). S1676 and S1685 each carry phosphoserine. The segment covering 1958–1970 (HHSDSQLTRKETV) has biased composition (basic and acidic residues). Phosphoserine occurs at positions 1989, 2001, 2092, and 2166. Residues 2082–2101 (PMPSAVSGENSQLTASRSEE) are disordered. Over residues 2088–2097 (SGENSQLTAS) the composition is skewed to polar residues. Disordered stretches follow at residues 2303–2322 (EENQQATHNPEGNGGHLATK), 2370–2469 (EPSV…HCLT), 2536–2559 (EGGLPTKSDHSGTWTSEGSPEKMG), and 2575–2596 (DVTLPPEDNGCGVGNEESPPKG). A phosphoserine mark is found at S2417 and S2443. Positions 2449-2459 (CLREPEQKPAE) are enriched in basic and acidic residues. S2554 is subject to Phosphoserine. S2681 carries the post-translational modification Phosphoserine. The disordered stretch occupies residues 2682-3032 (TEALSGCSVE…DENPLKKAKR (351 aa)). Acidic residues-rich tracts occupy residues 2692 to 2701 (ADPEEVEEEE) and 2715 to 2725 (SSEEELDDSPD). Positions 2727 to 2750 (LDSRIETAQRQYSETEPHDTKEEN) are enriched in basic and acidic residues. Residues 2758–2769 (SSVTSKTNSSTG) are compositionally biased toward polar residues. A compositionally biased stretch (basic and acidic residues) spans 2782 to 2804 (TGEKTEPNEDDGSIKSQEDDHPI). A compositionally biased stretch (basic residues) spans 2805 to 2815 (IIKRRRGRPRK). The a.T hook DNA-binding region spans 2807–2819 (KRRRGRPRKYPAE). A compositionally biased stretch (basic and acidic residues) spans 2822–2832 (FKSKEDSKTET). Polar residues predominate over residues 2833-2843 (DITTVEQSSPS). Residues S2840 and S2841 each carry the phosphoserine modification. Basic and acidic residues predominate over residues 2853-2867 (ESNKEIANLEEKSTS). A Phosphoserine modification is found at S2888. T2890 carries the phosphothreonine modification. A phosphoserine mark is found at S2892, S2898, and S2907. Residues K2915 and K2916 each participate in a glycyl lysine isopeptide (Lys-Gly) (interchain with G-Cter in ubiquitin) cross-link. Residues 2919-2932 (ESDEEEEEEEEEEP) are compositionally biased toward acidic residues. S2920 is subject to Phosphoserine. Over residues 2975 to 2987 (LAKEKLSTSEKVS) the composition is skewed to basic and acidic residues. S3000 is modified (phosphoserine). Residues 3020 to 3032 (QKVDENPLKKAKR) show a composition bias toward basic and acidic residues.

Belongs to the BOD1 family. In terms of assembly, interacts (via COMPASS-Shg1 domain) with SETD1A at stalled replication forks; this interaction mediates FANCD2-dependent nucleosome remodeling at reversed forks protecting them from nucleolytic degradation.

Its subcellular location is the chromosome. Component of the fork protection machinery required to protect stalled/damaged replication forks from uncontrolled DNA2-dependent resection. Acts by stabilizing RAD51 at stalled replication forks and protecting RAD51 nucleofilaments from the antirecombinogenic activities of FBH1 and BLM. Does not regulate spindle orientation. The sequence is that of Biorientation of chromosomes in cell division protein 1-like 1 from Mus musculus (Mouse).